Here is a 145-residue protein sequence, read N- to C-terminus: Ribosomal RNA large subunit methyltransferase H (145 aa).

Residues Leu68, Gly95, and 113–118 contribute to the S-adenosyl-L-methionine site; that span reads FSKMTF.

It belongs to the RNA methyltransferase RlmH family. Homodimer.

It localises to the cytoplasm. The enzyme catalyses pseudouridine(1915) in 23S rRNA + S-adenosyl-L-methionine = N(3)-methylpseudouridine(1915) in 23S rRNA + S-adenosyl-L-homocysteine + H(+). Specifically methylates the pseudouridine at position 1915 (m3Psi1915) in 23S rRNA. The sequence is that of Ribosomal RNA large subunit methyltransferase H from Mycoplasmopsis pulmonis (strain UAB CTIP) (Mycoplasma pulmonis).